The following is a 261-amino-acid chain: Cytosolic Fe-S cluster assembly factor Nubp2 homolog (261 aa).

14-21 (GKGGVGKS) provides a ligand contact to ATP. [4Fe-4S] cluster-binding residues include cysteine 188 and cysteine 191.

This sequence belongs to the Mrp/NBP35 ATP-binding proteins family. NUBP2/CFD1 subfamily. As to quaternary structure, heterotetramer of 2 Nubp1 and 2 Nubp2 chains. The cofactor is [4Fe-4S] cluster.

The protein resides in the cytoplasm. In terms of biological role, component of the cytosolic iron-sulfur (Fe/S) protein assembly (CIA) machinery. Required for maturation of extramitochondrial Fe-S proteins. The Nubp1-Nubp2 heterotetramer forms a Fe-S scaffold complex, mediating the de novo assembly of an Fe-S cluster and its transfer to target apoproteins. This Drosophila ananassae (Fruit fly) protein is Cytosolic Fe-S cluster assembly factor Nubp2 homolog.